Reading from the N-terminus, the 280-residue chain is Acyl-[acyl-carrier-protein]--UDP-N-acetylglucosamine O-acyltransferase (280 aa).

Belongs to the transferase hexapeptide repeat family. LpxA subfamily. Homotrimer.

The protein resides in the cytoplasm. The catalysed reaction is a (3R)-hydroxyacyl-[ACP] + UDP-N-acetyl-alpha-D-glucosamine = a UDP-3-O-[(3R)-3-hydroxyacyl]-N-acetyl-alpha-D-glucosamine + holo-[ACP]. It participates in glycolipid biosynthesis; lipid IV(A) biosynthesis; lipid IV(A) from (3R)-3-hydroxytetradecanoyl-[acyl-carrier-protein] and UDP-N-acetyl-alpha-D-glucosamine: step 1/6. Functionally, involved in the biosynthesis of lipid A, a phosphorylated glycolipid that anchors the lipopolysaccharide to the outer membrane of the cell. This chain is Acyl-[acyl-carrier-protein]--UDP-N-acetylglucosamine O-acyltransferase, found in Chlamydia trachomatis serovar A (strain ATCC VR-571B / DSM 19440 / HAR-13).